The chain runs to 175 residues: Gamma-crystallin B (175 aa).

Beta/gamma crystallin 'Greek key' domains follow at residues 2-40 (GKITFYEDRGFQGRCYECSSDCPNLQPYFSRCNSIRVDS) and 41-83 (GCWM…RLIP). The segment at 84–88 (QHSGT) is connecting peptide. Beta/gamma crystallin 'Greek key' domains lie at 89–129 (FRMR…NVLD) and 130–172 (GCWV…RRVM).

The protein belongs to the beta/gamma-crystallin family. As to quaternary structure, monomer.

In terms of biological role, crystallins are the dominant structural components of the vertebrate eye lens. The protein is Gamma-crystallin B (CRYGB) of Canis lupus familiaris (Dog).